We begin with the raw amino-acid sequence, 874 residues long: Valine--tRNA ligase (874 aa).

A 'HIGH' region motif is present at residues 51-61 (PNVTGVLHIGH). Residues 533 to 537 (KMSKS) carry the 'KMSKS' region motif. Lys536 lines the ATP pocket. Residues 813–873 (LVARLKKQLE…IKQELDLLEQ (61 aa)) adopt a coiled-coil conformation.

Belongs to the class-I aminoacyl-tRNA synthetase family. ValS type 1 subfamily. Monomer.

The protein localises to the cytoplasm. It carries out the reaction tRNA(Val) + L-valine + ATP = L-valyl-tRNA(Val) + AMP + diphosphate. In terms of biological role, catalyzes the attachment of valine to tRNA(Val). As ValRS can inadvertently accommodate and process structurally similar amino acids such as threonine, to avoid such errors, it has a 'posttransfer' editing activity that hydrolyzes mischarged Thr-tRNA(Val) in a tRNA-dependent manner. This chain is Valine--tRNA ligase, found in Helicobacter pylori (strain ATCC 700392 / 26695) (Campylobacter pylori).